We begin with the raw amino-acid sequence, 591 residues long: Max-binding protein MNT (591 aa).

At S2 the chain carries N-acetylserine. 2 disordered regions span residues 17 to 122 (AQQQ…APRQ) and 182 to 223 (PGVQ…GIGT). The span at 22–44 (RAREEQERLRLEREREREQEQKR) shows a compositional bias: basic and acidic residues. 2 stretches are compositionally biased toward pro residues: residues 63-84 (EAPPLPLSPPAPPPAPPPPLAT) and 102-120 (SLPPPPPLPPAAQPLPLAP). Positions 205–216 (PAEEAKSSEQKK) are enriched in basic and acidic residues. One can recognise a bHLH domain in the interval 222 to 273 (GTREVHNKLEKNRRAHLKECFETLKRNIPNVDDKKTSNLSVLRTALRYIQSL). The leucine-zipper stretch occupies residues 273-301 (LKRKEKEYEHEMERLAREKIATQQRLAEL). The tract at residues 321–426 (TGQPEDDQAS…PPPATPTQTL (106 aa)) is disordered. A compositionally biased stretch (acidic residues) spans 336-346 (EGEDNVDEEME). Positions 374–383 (STAPAPLPTH) are enriched in pro residues. Over residues 390-411 (PVALSPAHLPVQQQQPPQQKTP) the composition is skewed to low complexity. The span at 412-421 (LPAPPPPPAT) shows a compositional bias: pro residues.

In terms of assembly, efficient DNA binding requires dimerization with another bHLH protein. Binds DNA as a homodimer or a heterodimer with MAX.

It localises to the nucleus. Its function is as follows. Binds DNA as a heterodimer with MAX and represses transcription. Binds to the canonical E box sequence 5'-CACGTG-3' and, with higher affinity, to 5'-CACGCG-3'. In Mus musculus (Mouse), this protein is Max-binding protein MNT (Mnt).